An 87-amino-acid polypeptide reads, in one-letter code: Small ribosomal subunit protein bS20 (87 aa).

The segment covering 1-12 has biased composition (basic residues); that stretch reads MANHKSALKRNR. Residues 1–21 are disordered; it reads MANHKSALKRNRQAAVRNARN.

The protein belongs to the bacterial ribosomal protein bS20 family.

In terms of biological role, binds directly to 16S ribosomal RNA. This chain is Small ribosomal subunit protein bS20, found in Syntrophotalea carbinolica (strain DSM 2380 / NBRC 103641 / GraBd1) (Pelobacter carbinolicus).